The chain runs to 108 residues: UPF0060 membrane protein DSY4157 (108 aa).

The next 4 membrane-spanning stretches (helical) occupy residues 6–26 (ILFI…WLWL), 31–51 (PYWY…IPTL), 60–80 (VYAA…WGVD), and 86–106 (TYDW…LWAP).

This sequence belongs to the UPF0060 family.

The protein localises to the cell membrane. The protein is UPF0060 membrane protein DSY4157 of Desulfitobacterium hafniense (strain Y51).